A 90-amino-acid polypeptide reads, in one-letter code: Interferon alpha-inducible protein 27-like protein 2A (90 aa).

Residues 1–24 form the signal peptide; it reads MLGTLFGSAIGGALAVAGAPVALA. 2 helical membrane passes run 28–48 and 67–89; these read FTGT…AAAI and GVLG…VGAL.

Belongs to the IFI6/IFI27 family. Homodimer. Interacts with SKP2. Interacts with NR4A1. May interact with BCL2.

It localises to the nucleus inner membrane. Its function is as follows. May be involved in the interferon-induced negative regulation of the transcriptional activity of NR4A1, NR4A2 and NR4A3 through the enhancement of XPO1-mediated nuclear export of these nuclear receptors. Through the regulation of NR4A1 transcriptional activity, may play a role in the vascular response to injury. The polypeptide is Interferon alpha-inducible protein 27-like protein 2A (Mus musculus (Mouse)).